The following is a 35-amino-acid chain: Probable L,D-transpeptidase ErfK/SrfK (35 aa).

An N-terminal signal peptide occupies residues 1 to 21; it reads MRRVKLLCTALMLLASHGALA.

This sequence belongs to the YkuD family.

The protein resides in the periplasm. The protein operates within cell wall biogenesis; peptidoglycan biosynthesis. This Klebsiella aerogenes (Enterobacter aerogenes) protein is Probable L,D-transpeptidase ErfK/SrfK (erfK).